The primary structure comprises 84 residues: Delta-stichotoxin-Sgt3a (84 aa).

The signal sequence occupies residues 1 to 19; it reads MAYLKIVLVALMLVVAVSA. Positions 20–33 are excised as a propeptide; the sequence is MRLSDQEDQDISVA. 3 disulfides stabilise this stretch: Cys38-Cys78, Cys40-Cys68, and Cys61-Cys79. Gly84 is a propeptide.

The protein belongs to the sea anemone sodium channel inhibitory toxin family. Type II subfamily.

It localises to the secreted. The protein localises to the nematocyst. Its function is as follows. Binds specifically to voltage-gated sodium channels (Nav), thereby delaying their inactivation during signal transduction. The sequence is that of Delta-stichotoxin-Sgt3a from Stichodactyla gigantea (Giant carpet anemone).